The sequence spans 185 residues: MINEIRKDAEVRMEKCLEAFQNHISKIRTGRASPSILDGIQVEYYGTATPLRQLANIVVEDSRTLALTVFDRSLSAAVEKAIMTSDLGLNPSSAGTVIRVPLPALTEERRKDLIKVVRAEAEQGRVSIRNVRRDANDKVKALLKDKEISEDEDRRSQDDVQKLTDAYIKKVDAALAVKEAELMDF.

Belongs to the RRF family.

Its subcellular location is the cytoplasm. Responsible for the release of ribosomes from messenger RNA at the termination of protein biosynthesis. May increase the efficiency of translation by recycling ribosomes from one round of translation to another. The protein is Ribosome-recycling factor of Yersinia pseudotuberculosis serotype O:1b (strain IP 31758).